The sequence spans 842 residues: Elongation factor 2 (842 aa).

Positions alanine 17 to valine 346 constitute a tr-type G domain. GTP is bound by residues alanine 26–serine 33, asparagine 158–aspartate 161, and serine 213–leucine 215. Histidine 699 is subject to Diphthamide.

Belongs to the TRAFAC class translation factor GTPase superfamily. Classic translation factor GTPase family. EF-G/EF-2 subfamily.

The protein localises to the cytoplasm. It carries out the reaction GTP + H2O = GDP + phosphate + H(+). It functions in the pathway protein biosynthesis; polypeptide chain elongation. Its function is as follows. Catalyzes the GTP-dependent ribosomal translocation step during translation elongation. During this step, the ribosome changes from the pre-translocational (PRE) to the post-translocational (POST) state as the newly formed A-site-bound peptidyl-tRNA and P-site-bound deacylated tRNA move to the P and E sites, respectively. Catalyzes the coordinated movement of the two tRNA molecules, the mRNA and conformational changes in the ribosome. This is Elongation factor 2 (EFT2) from Meyerozyma guilliermondii (strain ATCC 6260 / CBS 566 / DSM 6381 / JCM 1539 / NBRC 10279 / NRRL Y-324) (Yeast).